A 95-amino-acid polypeptide reads, in one-letter code: UPF0473 protein ABC1595 (95 aa).

It belongs to the UPF0473 family.

This is UPF0473 protein ABC1595 from Shouchella clausii (strain KSM-K16) (Alkalihalobacillus clausii).